Consider the following 1556-residue polypeptide: uncharacterized protein (1556 aa).

Ser2 is modified (N-acetylserine). Over residues 145–156 (NQLENRKSLERK) the composition is skewed to basic and acidic residues. A disordered region spans residues 145-170 (NQLENRKSLERKPSRKRRKKNSNVND). Residues 378 to 583 (SGDYPVCAKG…MIMSYLKLHP (206 aa)) form the Helicase ATP-binding domain. 391 to 398 (EEMGLGKT) is a binding site for ATP. Phosphoserine is present on Ser810. The disordered stretch occupies residues 810 to 850 (SEDEDEHMDERFGEKETSSGDESDREINGAKNHDNHNNDGM). Composition is skewed to basic and acidic residues over residues 817–827 (MDERFGEKETS) and 834–846 (REINGAKNHDNHN). The segment at 1239 to 1277 (CSICLGEVEIGAIIKCGHYFCKSCILTWLRAHSKCPICK) adopts an RING-type zinc-finger fold. Residues 1297–1309 (REKEIQEPRREGA) show a composition bias toward basic and acidic residues. Disordered stretches follow at residues 1297–1319 (REKEIQEPRREGADSSQDNSNEN) and 1508–1534 (EKSKKGDKYDEAQDETDNEESDDAKFE). A compositionally biased stretch (low complexity) spans 1310–1319 (DSSQDNSNEN). The Helicase C-terminal domain maps to 1363–1531 (KLISYLRLKS…ETDNEESDDA (169 aa)). Over residues 1508–1518 (EKSKKGDKYDE) the composition is skewed to basic and acidic residues. A compositionally biased stretch (acidic residues) spans 1519 to 1529 (AQDETDNEESD).

Belongs to the SNF2/RAD54 helicase family.

The protein resides in the nucleus. Functionally, is probably involved in a pathway contributing to genomic integrity. This is an uncharacterized protein from Saccharomyces cerevisiae (strain ATCC 204508 / S288c) (Baker's yeast).